The sequence spans 481 residues: Probable myosin light chain kinase DDB_G0284661 (481 aa).

The Protein kinase domain maps to 13–269 (YNITDIIGEG…VKQSLAHKWI (257 aa)). ATP contacts are provided by residues 19 to 27 (IGEGTFSTV) and K43. D136 functions as the Proton acceptor in the catalytic mechanism. Disordered stretches follow at residues 285 to 315 (PLIT…PSLK) and 345 to 427 (SNSH…DDDE). Residues 379-421 (SNNNINNNNDNNDNNNSNSNNSNNNINNFINNNNNNNNNNSNF) show a composition bias toward low complexity.

Belongs to the protein kinase superfamily. CAMK Ser/Thr protein kinase family. CaMK subfamily.

The catalysed reaction is L-seryl-[myosin light chain] + ATP = O-phospho-L-seryl-[myosin light chain] + ADP + H(+). It catalyses the reaction L-threonyl-[myosin light chain] + ATP = O-phospho-L-threonyl-[myosin light chain] + ADP + H(+). Does not have a calmodulin-binding domain. Its function is as follows. May phosphorylate a specific serine in the N-terminus of a myosin light chain. The polypeptide is Probable myosin light chain kinase DDB_G0284661 (Dictyostelium discoideum (Social amoeba)).